The chain runs to 1241 residues: Sterol 3-beta-glucosyltransferase (1241 aa).

Residues 1 to 11 (MSGIESTEEPC) are compositionally biased toward acidic residues. Disordered regions lie at residues 1–97 (MSGI…KPSI) and 124–189 (DQQV…TLRK). The span at 25 to 34 (PEERQTRKDS) shows a compositional bias: basic and acidic residues. Residues 136–155 (ESEDQQADESSDEQEDDDQD) are compositionally biased toward acidic residues. The GRAM 1 domain maps to 220–267 (NKLKRTFDISDTDVFISDYPCWLMGDVLLQGHLYITKHHILFFAFLPK). The PH domain maps to 271-373 (SISKSGALTT…WVSSLKKHIF (103 aa)). The segment at 499-556 (DDFSQEQESAESSKPVSDDEIVSADDNQELEEKQPQDNLANAEKENHDKVSRANSRRT) is disordered. Residues 516–527 (DDEIVSADDNQE) show a composition bias toward acidic residues. Residues 540–549 (AEKENHDKVS) show a composition bias toward basic and acidic residues. The 67-residue stretch at 609 to 675 (ERFRKHFSLT…SDIENVNKEK (67 aa)) folds into the GRAM 2 domain. The disordered stretch occupies residues 720-741 (KGSTDSSPPNASEGSSDESCNL). Positions 723–741 (TDSSPPNASEGSSDESCNL) are enriched in polar residues. Residues S797, R798, D800, N1071, V1098, H1100, H1113, S1116, G1117, T1118, D1137, and Q1138 each contribute to the UDP-alpha-D-glucose site.

It belongs to the glycosyltransferase 28 family.

It localises to the cytoplasm. It is found in the preautophagosomal structure membrane. The enzyme catalyses a sterol + UDP-alpha-D-glucose = a sterol 3-beta-D-glucoside + UDP + H(+). The catalysed reaction is ergosterol + UDP-alpha-D-glucose = ergosteryl 3-beta-D-glucoside + UDP + H(+). Its function is as follows. Sterol glycosyltransferase responsible for the glycosylation of ergosterol to form ergosterol-glucoside. Mediates autophagic degradation of peroxisomes (pexophagy). The polypeptide is Sterol 3-beta-glucosyltransferase (Pichia angusta (Yeast)).